A 447-amino-acid chain; its full sequence is Exodeoxyribonuclease 7 large subunit (447 aa).

The protein belongs to the XseA family. Heterooligomer composed of large and small subunits.

The protein resides in the cytoplasm. It catalyses the reaction Exonucleolytic cleavage in either 5'- to 3'- or 3'- to 5'-direction to yield nucleoside 5'-phosphates.. Bidirectionally degrades single-stranded DNA into large acid-insoluble oligonucleotides, which are then degraded further into small acid-soluble oligonucleotides. The protein is Exodeoxyribonuclease 7 large subunit of Thioalkalivibrio sulfidiphilus (strain HL-EbGR7).